The chain runs to 847 residues: B-cell receptor CD22 (847 aa).

The signal sequence occupies residues 1–19 (MHLLGPWLLLLVLEYLAFS). One can recognise an Ig-like V-type domain in the interval 20–138 (DSSKWAFEHP…MERIHLNVSE (119 aa)). Residues 20–687 (DSSKWAFEHP…YYSPETIGRR (668 aa)) lie on the Extracellular side of the membrane. 3 N-linked (GlcNAc...) asparagine glycosylation sites follow: asparagine 67, asparagine 101, and asparagine 112. N-acetylneuraminate is bound at residue arginine 120. N-linked (GlcNAc...) asparagine glycosylation is found at asparagine 135, asparagine 164, and asparagine 231. 6 Ig-like C2-type domains span residues 143-235 (PHIQ…DTVQ), 242-326 (PKLE…VFLQ), 331-416 (PEPS…LDVQ), 419-500 (PKKV…VALN), 505-582 (PRDV…QTAS), and 593-676 (PRRL…STLT). Cysteine 161 and cysteine 219 form a disulfide bridge. Intrachain disulfides connect cysteine 265/cysteine 309 and cysteine 353/cysteine 396. Residues asparagine 363, asparagine 428, asparagine 445, asparagine 448, and asparagine 479 are each glycosylated (N-linked (GlcNAc...) asparagine). 2 cysteine pairs are disulfide-bonded: cysteine 442-cysteine 484 and cysteine 529-cysteine 571. 2 N-linked (GlcNAc...) asparagine glycosylation sites follow: asparagine 574 and asparagine 634. Cysteine 616 and cysteine 659 form a disulfide bridge. Residues 688–708 (VAVGFGSCLAILILAICGLKL) traverse the membrane as a helical segment. Topologically, residues 709-847 (QRRWKRTQSQ…ENVDYVILKH (139 aa)) are cytoplasmic. Phosphoserine occurs at positions 725, 726, and 729. Short sequence motifs (ITIM motif) lie at residues 760-765 (ISYTTL) and 794-799 (VTYSVL). Position 762 is a phosphotyrosine (tyrosine 762). Tyrosine 807, tyrosine 822, and tyrosine 842 each carry phosphotyrosine. 2 short sequence motifs (ITIM motif) span residues 820-825 (IHYSEL) and 840-845 (VDYVIL).

This sequence belongs to the immunoglobulin superfamily. SIGLEC (sialic acid binding Ig-like lectin) family. In terms of assembly, predominantly monomer of isoform CD22-beta. Also found as heterodimer of isoform CD22-beta and a shorter isoform. Interacts with PTPN6/SHP-1, LYN, SYK, PIK3R1/PIK3R2 and PLCG1 upon phosphorylation. Interacts with GRB2, INPP5D and SHC1 upon phosphorylation. May form a complex with INPP5D/SHIP, GRB2 and SHC1. In terms of processing, phosphorylation of Tyr-762, Tyr-807 and Tyr-822 are involved in binding to SYK, GRB2 and SYK, respectively. Phosphorylation of Tyr-842 is involved in binding to SYK, PLCG2 and PIK3R1/PIK3R2. Post-translationally, phosphorylated on tyrosine residues by LYN.

The protein localises to the cell membrane. In terms of biological role, most highly expressed siglec (sialic acid-binding immunoglobulin-like lectin) on B-cells that plays a role in various aspects of B-cell biology including differentiation, antigen presentation, and trafficking to bone marrow. Binds to alpha 2,6-linked sialic acid residues of surface molecules such as CD22 itself, CD45 and IgM in a cis configuration. Can also bind to ligands on other cells as an adhesion molecule in a trans configuration. Acts as an inhibitory coreceptor on the surface of B-cells and inhibits B-cell receptor induced signaling, characterized by inhibition of the calcium mobilization and cellular activation. Mechanistically, the immunoreceptor tyrosine-based inhibitory motif domain is phosphorylated by the Src kinase LYN, which in turn leads to the recruitment of the protein tyrosine phosphatase 1/PTPN6, leading to the negative regulation of BCR signaling. If this negative signaling from is of sufficient strength, apoptosis of the B-cell can be induced. The protein is B-cell receptor CD22 of Pan troglodytes (Chimpanzee).